Here is a 350-residue protein sequence, read N- to C-terminus: Phosphoribosylformylglycinamidine cyclo-ligase (350 aa).

The protein belongs to the AIR synthase family.

It localises to the cytoplasm. The catalysed reaction is 2-formamido-N(1)-(5-O-phospho-beta-D-ribosyl)acetamidine + ATP = 5-amino-1-(5-phospho-beta-D-ribosyl)imidazole + ADP + phosphate + H(+). It functions in the pathway purine metabolism; IMP biosynthesis via de novo pathway; 5-amino-1-(5-phospho-D-ribosyl)imidazole from N(2)-formyl-N(1)-(5-phospho-D-ribosyl)glycinamide: step 2/2. The sequence is that of Phosphoribosylformylglycinamidine cyclo-ligase from Nitratidesulfovibrio vulgaris (strain DSM 19637 / Miyazaki F) (Desulfovibrio vulgaris).